We begin with the raw amino-acid sequence, 257 residues long: Protein UL24 homolog (257 aa).

Residues 193-257 (KKPKMDRGGK…PRAGPACSGP (65 aa)) are disordered.

It belongs to the herpesviridae UL24 family.

The protein localises to the virion. The protein resides in the host cytoplasm. Its subcellular location is the host nucleus. It localises to the host nucleolus. It is found in the host Golgi apparatus. Its function is as follows. May participate in nuclear egress of viral particles. Plays a role in the dispersal of several host nucleolar proteins including NCL/nucleolin and NPM1. Since deletion of host NCL/nucleolin negatively impact on nuclear egress, UL24 supposedly acts on this process through its effect on host nucleoli. Induces cell cycle arrest in host cells at the G2/M phase following by apoptosis. The mechanism involves the inhibition of host mitotic complex cyclin-B/CDK1. This chain is Protein UL24 homolog (ORF20), found in Homo sapiens (Human).